Here is a 504-residue protein sequence, read N- to C-terminus: Alpha,alpha-trehalose-phosphate synthase [UDP-forming] (504 aa).

D-glucose 6-phosphate contacts are provided by Tyr97 and Asp151. The UDP site is built by Arg287 and Lys292. Residues Arg287 and Lys292 each coordinate UDP-alpha-D-glucose. Arg325 is a binding site for D-glucose 6-phosphate. 386-394 (DGMNLVSYE) is a UDP-alpha-D-glucose binding site. 390–394 (LVSYE) contributes to the UDP binding site. The tract at residues 482–504 (AGKLPTKETPVNGETSKLETSSQ) is disordered. A compositionally biased stretch (polar residues) spans 493–504 (NGETSKLETSSQ).

It belongs to the glycosyltransferase 20 family.

It carries out the reaction D-glucose 6-phosphate + UDP-alpha-D-glucose = alpha,alpha-trehalose 6-phosphate + UDP + H(+). The protein operates within carbohydrate biosynthesis. Functionally, synthase catalytic subunit of the trehalose synthase complex that catalyzes the production of trehalose from glucose-6-phosphate and UDP-alpha-D-glucose in a two step process. The protein is Alpha,alpha-trehalose-phosphate synthase [UDP-forming] (tpsA) of Emericella nidulans (strain FGSC A4 / ATCC 38163 / CBS 112.46 / NRRL 194 / M139) (Aspergillus nidulans).